The following is a 288-amino-acid chain: Proteasome assembly chaperone 1 (288 aa).

Ala2 carries the post-translational modification N-acetylalanine. Positions 13-35 (PCRAGTEDEEEEEEGRRETPEDR) are disordered. Thr18 carries the post-translational modification Phosphothreonine. Over residues 26–35 (EGRRETPEDR) the composition is skewed to basic and acidic residues. The residue at position 54 (Thr54) is a Phosphothreonine. Ser180 is modified (phosphoserine). The residue at position 264 (Lys264) is an N6-acetyllysine.

It belongs to the PSMG1 family. As to quaternary structure, forms a heterodimer with PSMG2. The PSMG1-PSMG2 heterodimer interacts directly with the PSMA5 and PSMA7 proteasome alpha subunits. Degraded by the proteasome upon completion of 20S proteasome maturation. As to expression, in the adult, detected in brain, colon, leukocytes, breast and testis. Widely expressed in the fetus. Also expressed in a variety of proliferating cell lines.

Its subcellular location is the cytoplasm. The protein resides in the endoplasmic reticulum. Chaperone protein which promotes assembly of the 20S proteasome as part of a heterodimer with PSMG2. The PSMG1-PSMG2 heterodimer binds to the PSMA5 and PSMA7 proteasome subunits, promotes assembly of the proteasome alpha subunits into the heteroheptameric alpha ring and prevents alpha ring dimerization. The polypeptide is Proteasome assembly chaperone 1 (Homo sapiens (Human)).